Reading from the N-terminus, the 141-residue chain is Large ribosomal subunit protein uL11 (141 aa).

Belongs to the universal ribosomal protein uL11 family. As to quaternary structure, part of the ribosomal stalk of the 50S ribosomal subunit. Interacts with L10 and the large rRNA to form the base of the stalk. L10 forms an elongated spine to which L12 dimers bind in a sequential fashion forming a multimeric L10(L12)X complex. In terms of processing, one or more lysine residues are methylated.

Its function is as follows. Forms part of the ribosomal stalk which helps the ribosome interact with GTP-bound translation factors. The chain is Large ribosomal subunit protein uL11 from Helicobacter pylori (strain P12).